Consider the following 418-residue polypeptide: Tryptophan synthase beta chain (418 aa).

Positions 1–12 (MTSTLPTANTPD) are enriched in polar residues. A disordered region spans residues 1 to 21 (MTSTLPTANTPDPASLMPSVR). At Lys-111 the chain carries N6-(pyridoxal phosphate)lysine.

It belongs to the TrpB family. As to quaternary structure, tetramer of two alpha and two beta chains. It depends on pyridoxal 5'-phosphate as a cofactor.

The catalysed reaction is (1S,2R)-1-C-(indol-3-yl)glycerol 3-phosphate + L-serine = D-glyceraldehyde 3-phosphate + L-tryptophan + H2O. Its pathway is amino-acid biosynthesis; L-tryptophan biosynthesis; L-tryptophan from chorismate: step 5/5. In terms of biological role, the beta subunit is responsible for the synthesis of L-tryptophan from indole and L-serine. This Synechococcus sp. (strain CC9311) protein is Tryptophan synthase beta chain.